A 90-amino-acid polypeptide reads, in one-letter code: Barrier-to-autointegration factor (90 aa).

Ser-2 and Ser-3 each carry phosphoserine. Thr-4 carries the post-translational modification Phosphothreonine. Position 5 is a phosphoserine (Ser-5).

It belongs to the BAF family. As to quaternary structure, homodimer.

The protein localises to the nucleus. Its subcellular location is the chromosome. It localises to the nucleus envelope. The protein resides in the cytoplasm. Non-specific DNA-binding protein that plays key roles in mitotic nuclear reassembly, chromatin organization, DNA damage response, gene expression and intrinsic immunity against foreign DNA. Contains two non-specific double-stranded DNA (dsDNA)-binding sites which promote DNA cross-bridging. Plays a key role in nuclear membrane reformation at the end of mitosis by driving formation of a single nucleus in a spindle-independent manner. Transiently cross-bridges anaphase chromosomes via its ability to bridge distant DNA sites, leading to the formation of a dense chromatin network at the chromosome ensemble surface that limits membranes to the surface. Also acts as a negative regulator of innate immune activation by restricting CGAS activity toward self-DNA upon acute loss of nuclear membrane integrity. Outcompetes CGAS for DNA-binding, thereby preventing CGAS activation and subsequent damaging autoinflammatory responses. Also involved in DNA damage response; acts by inhibiting the ADP-ribosyltransferase activity of PARP1. Involved in the recognition of exogenous dsDNA in the cytosol: associates with exogenous dsDNA immediately after its appearance in the cytosol at endosome breakdown and is required to avoid autophagy. The polypeptide is Barrier-to-autointegration factor (banf1) (Danio rerio (Zebrafish)).